Consider the following 197-residue polypeptide: Recombination protein RecR (197 aa).

The C4-type zinc finger occupies 57–72; the sequence is CSVCFGITEDDPCHLC. The region spanning 79–174 is the Toprim domain; it reads TTICVVEEPQ…RVTRLAHGIP (96 aa).

Belongs to the RecR family.

Functionally, may play a role in DNA repair. It seems to be involved in an RecBC-independent recombinational process of DNA repair. It may act with RecF and RecO. This Geotalea daltonii (strain DSM 22248 / JCM 15807 / FRC-32) (Geobacter daltonii) protein is Recombination protein RecR.